A 616-amino-acid chain; its full sequence is 2-isopropylmalate synthase (616 aa).

The disordered stretch occupies residues 1–34 (MSPNDAFISAPAKIETPVGPRNEGQPAWNKQRGS). The region spanning 67 to 341 (PQWCAVDLRD…DPQLDFTDIR (275 aa)) is the Pyruvate carboxyltransferase domain. 4 residues coordinate Mg(2+): aspartate 76, histidine 280, histidine 282, and asparagine 316. The tract at residues 490–616 (RTAPVEQIAL…NHEAVLAGGV (127 aa)) is regulatory domain.

It belongs to the alpha-IPM synthase/homocitrate synthase family. LeuA type 2 subfamily. In terms of assembly, homodimer. Mg(2+) serves as cofactor.

The protein resides in the cytoplasm. It catalyses the reaction 3-methyl-2-oxobutanoate + acetyl-CoA + H2O = (2S)-2-isopropylmalate + CoA + H(+). It functions in the pathway amino-acid biosynthesis; L-leucine biosynthesis; L-leucine from 3-methyl-2-oxobutanoate: step 1/4. With respect to regulation, inhibited by L-leucine, the pathway end product. Its function is as follows. Catalyzes the condensation of the acetyl group of acetyl-CoA with 3-methyl-2-oxobutanoate (2-ketoisovalerate) to form 3-carboxy-3-hydroxy-4-methylpentanoate (2-isopropylmalate). Complements an E.coli leuA deletion. In Corynebacterium glutamicum (strain ATCC 13032 / DSM 20300 / JCM 1318 / BCRC 11384 / CCUG 27702 / LMG 3730 / NBRC 12168 / NCIMB 10025 / NRRL B-2784 / 534), this protein is 2-isopropylmalate synthase.